The chain runs to 27 residues: Delta-conotoxin TxVIB (27 aa).

3 disulfide bridges follow: Cys2/Cys17, Cys9/Cys21, and Cys16/Cys26.

The protein belongs to the conotoxin O1 superfamily. As to expression, expressed by the venom duct.

It is found in the secreted. Its function is as follows. Delta-conotoxins bind to site 6 of voltage-gated sodium channels (Nav) and inhibit the inactivation process. Induces membrane depolarization and spontaneous repetitive firing of neurons. The polypeptide is Delta-conotoxin TxVIB (Conus textile (Cloth-of-gold cone)).